A 453-amino-acid chain; its full sequence is tRNA modification GTPase MnmE (453 aa).

Residues Arg-28, Glu-90, and Arg-129 each coordinate (6S)-5-formyl-5,6,7,8-tetrahydrofolate. Positions 224-375 constitute a TrmE-type G domain; it reads GLRVAIIGRP…LSSALLKLCG (152 aa). Asn-234 is a K(+) binding site. GTP is bound by residues 234-239, 253-259, 278-281, and 356-358; these read NVGKSS, TDLPGTT, DTAG, and SAR. Residue Ser-238 participates in Mg(2+) binding. K(+)-binding residues include Thr-253, Leu-255, and Thr-258. Thr-259 is a Mg(2+) binding site. A (6S)-5-formyl-5,6,7,8-tetrahydrofolate-binding site is contributed by Lys-453.

This sequence belongs to the TRAFAC class TrmE-Era-EngA-EngB-Septin-like GTPase superfamily. TrmE GTPase family. Homodimer. Heterotetramer of two MnmE and two MnmG subunits. K(+) is required as a cofactor.

The protein resides in the cytoplasm. Its function is as follows. Exhibits a very high intrinsic GTPase hydrolysis rate. Involved in the addition of a carboxymethylaminomethyl (cmnm) group at the wobble position (U34) of certain tRNAs, forming tRNA-cmnm(5)s(2)U34. This chain is tRNA modification GTPase MnmE, found in Synechococcus sp. (strain RCC307).